The sequence spans 1502 residues: E3 ubiquitin-protein ligase UPL4 (1502 aa).

Positions methionine 1–alanine 21 are enriched in basic and acidic residues. Positions methionine 1–aspartate 107 are disordered. Over residues cysteine 22–glycine 46 the composition is skewed to polar residues. Residues aspartate 67–aspartate 90 show a composition bias toward acidic residues. A compositionally biased stretch (basic and acidic residues) spans proline 91 to aspartate 107. ARM repeat units lie at residues glutamate 143 to aspartate 183, proline 186 to arginine 226, glutamate 228 to lysine 265, and leucine 267 to aspartate 306. Positions cysteine 833–aspartate 881 are disordered. The span at aspartate 849–threonine 875 shows a compositional bias: polar residues. The tract at residues arginine 1022–serine 1096 is K-box. Positions lysine 1128–serine 1502 constitute an HECT domain. Cysteine 1469 serves as the catalytic Glycyl thioester intermediate.

Belongs to the UPL family. K-HECT subfamily.

It catalyses the reaction S-ubiquitinyl-[E2 ubiquitin-conjugating enzyme]-L-cysteine + [acceptor protein]-L-lysine = [E2 ubiquitin-conjugating enzyme]-L-cysteine + N(6)-ubiquitinyl-[acceptor protein]-L-lysine.. It participates in protein modification; protein ubiquitination. Probable E3 ubiquitin-protein ligase which mediates ubiquitination and subsequent proteasomal degradation of target proteins. This chain is E3 ubiquitin-protein ligase UPL4 (UPL4), found in Arabidopsis thaliana (Mouse-ear cress).